The primary structure comprises 506 residues: Lysine--tRNA ligase (506 aa).

Glu416 and Glu423 together coordinate Mg(2+).

The protein belongs to the class-II aminoacyl-tRNA synthetase family. As to quaternary structure, homodimer. Mg(2+) serves as cofactor.

The protein resides in the cytoplasm. The enzyme catalyses tRNA(Lys) + L-lysine + ATP = L-lysyl-tRNA(Lys) + AMP + diphosphate. This chain is Lysine--tRNA ligase, found in Baumannia cicadellinicola subsp. Homalodisca coagulata.